The following is a 241-amino-acid chain: Adenosylcobinamide-GDP ribazoletransferase (241 aa).

5 consecutive transmembrane segments (helical) span residues 24-44 (IVFF…SIFY), 48-68 (FINQ…IYGF), 103-123 (VVTF…FNSI), 175-195 (VIIL…FSLI), and 218-238 (IIGF…LISF).

Belongs to the CobS family. The cofactor is Mg(2+).

Its subcellular location is the cell membrane. The catalysed reaction is alpha-ribazole + adenosylcob(III)inamide-GDP = adenosylcob(III)alamin + GMP + H(+). It carries out the reaction alpha-ribazole 5'-phosphate + adenosylcob(III)inamide-GDP = adenosylcob(III)alamin 5'-phosphate + GMP + H(+). Its pathway is cofactor biosynthesis; adenosylcobalamin biosynthesis; adenosylcobalamin from cob(II)yrinate a,c-diamide: step 7/7. Functionally, joins adenosylcobinamide-GDP and alpha-ribazole to generate adenosylcobalamin (Ado-cobalamin). Also synthesizes adenosylcobalamin 5'-phosphate from adenosylcobinamide-GDP and alpha-ribazole 5'-phosphate. The polypeptide is Adenosylcobinamide-GDP ribazoletransferase (Picrophilus torridus (strain ATCC 700027 / DSM 9790 / JCM 10055 / NBRC 100828 / KAW 2/3)).